The following is a 424-amino-acid chain: Histidine--tRNA ligase (424 aa).

Belongs to the class-II aminoacyl-tRNA synthetase family. Homodimer.

The protein resides in the cytoplasm. The catalysed reaction is tRNA(His) + L-histidine + ATP = L-histidyl-tRNA(His) + AMP + diphosphate + H(+). The sequence is that of Histidine--tRNA ligase from Escherichia coli (strain SE11).